The primary structure comprises 92 residues: PqqA binding protein (92 aa).

Belongs to the PqqD family. As to quaternary structure, monomer. Interacts with PqqE.

Its pathway is cofactor biosynthesis; pyrroloquinoline quinone biosynthesis. Functions as a PqqA binding protein and presents PqqA to PqqE, in the pyrroloquinoline quinone (PQQ) biosynthetic pathway. The sequence is that of PqqA binding protein from Xanthomonas oryzae pv. oryzae (strain PXO99A).